The sequence spans 103 residues: Putative glutaredoxin-C12 (103 aa).

Positions 1 to 102 constitute a Glutaredoxin domain; the sequence is MERVRDLASE…QMLKASNAIW (102 aa). Cys21 and Cys24 are joined by a disulfide.

The protein belongs to the glutaredoxin family. CC-type subfamily.

It localises to the cytoplasm. Functionally, has a glutathione-disulfide oxidoreductase activity in the presence of NADPH and glutathione reductase. Reduces low molecular weight disulfides and proteins. In Arabidopsis thaliana (Mouse-ear cress), this protein is Putative glutaredoxin-C12 (GRXC12).